The chain runs to 801 residues: Elongation factor G, mitochondrial (801 aa).

A mitochondrion-targeting transit peptide spans 1 to 24 (MRCPSLARLPHRAISGLTRLPVRL). The tr-type G domain maps to 99–386 (SRIRNIGIAA…GVIDYLPNPS (288 aa)). GTP is bound by residues 108–115 (AHIDSGKT), 184–188 (DTPGH), and 238–241 (NKMD).

Belongs to the TRAFAC class translation factor GTPase superfamily. Classic translation factor GTPase family. EF-G/EF-2 subfamily.

It localises to the mitochondrion. It participates in protein biosynthesis; polypeptide chain elongation. Mitochondrial GTPase that catalyzes the GTP-dependent ribosomal translocation step during translation elongation. During this step, the ribosome changes from the pre-translocational (PRE) to the post-translocational (POST) state as the newly formed A-site-bound peptidyl-tRNA and P-site-bound deacylated tRNA move to the P and E sites, respectively. Catalyzes the coordinated movement of the two tRNA molecules, the mRNA and conformational changes in the ribosome. The sequence is that of Elongation factor G, mitochondrial (mef1) from Aspergillus clavatus (strain ATCC 1007 / CBS 513.65 / DSM 816 / NCTC 3887 / NRRL 1 / QM 1276 / 107).